The primary structure comprises 35 residues: Photosystem II reaction center protein Psb30 (35 aa).

Residues 7 to 27 (LIANFAALALITLAGPAVIFI) traverse the membrane as a helical segment.

Belongs to the Psb30/Ycf12 family. In terms of assembly, PSII is composed of 1 copy each of membrane proteins PsbA, PsbB, PsbC, PsbD, PsbE, PsbF, PsbH, PsbI, PsbJ, PsbK, PsbL, PsbM, PsbT, PsbX, PsbY, PsbZ, Psb30/Ycf12, peripheral proteins of the oxygen-evolving complex and a large number of cofactors. It forms dimeric complexes.

The protein localises to the plastid. Its subcellular location is the organellar chromatophore thylakoid membrane. Functionally, a core subunit of photosystem II (PSII), probably helps stabilize the reaction center. This Paulinella chromatophora protein is Photosystem II reaction center protein Psb30.